Here is a 191-residue protein sequence, read N- to C-terminus: 3-hydroxyanthranilate 3,4-dioxygenase 2 (191 aa).

R48 is an O2 binding site. The Fe cation site is built by H52, E73, and H111. Substrate is bound at residue E73. The substrate site is built by R115 and E125.

It belongs to the 3-HAO family. Fe(2+) serves as cofactor.

The protein localises to the cytoplasm. It catalyses the reaction 3-hydroxyanthranilate + O2 = (2Z,4Z)-2-amino-3-carboxymuconate 6-semialdehyde. Its pathway is cofactor biosynthesis; NAD(+) biosynthesis; quinolinate from L-kynurenine: step 3/3. Catalyzes the oxidative ring opening of 3-hydroxyanthranilate to 2-amino-3-carboxymuconate semialdehyde, which spontaneously cyclizes to quinolinate. This chain is 3-hydroxyanthranilate 3,4-dioxygenase 2 (bna1-2), found in Aspergillus clavatus (strain ATCC 1007 / CBS 513.65 / DSM 816 / NCTC 3887 / NRRL 1 / QM 1276 / 107).